We begin with the raw amino-acid sequence, 324 residues long: NAD(P)H-dependent D-xylose reductase XYR1 (324 aa).

The Proton donor role is filled by Y50. H112 lines the substrate pocket. Residues 168–169 (SN), 217–226 (SSFGPASFKE), and 273–283 (KSSREKTMKSN) contribute to the NAD(+) site.

Belongs to the aldo/keto reductase family.

The enzyme catalyses xylitol + NAD(+) = D-xylose + NADH + H(+). It carries out the reaction xylitol + NADP(+) = D-xylose + NADPH + H(+). The protein operates within carbohydrate metabolism; D-xylose degradation. In terms of biological role, catalyzes the initial reaction in the xylose utilization pathway by reducing D-xylose into xylitol. Xylose is a major component of hemicelluloses such as xylan. Most fungi utilize D-xylose via three enzymatic reactions, xylose reductase (XR), xylitol dehydrogenase (XDH), and xylulokinase, to form xylulose 5-phosphate, which enters pentose phosphate pathway. This is NAD(P)H-dependent D-xylose reductase XYR1 (XYR1) from Pyricularia oryzae (strain 70-15 / ATCC MYA-4617 / FGSC 8958) (Rice blast fungus).